Here is a 298-residue protein sequence, read N- to C-terminus: tRNA-uridine aminocarboxypropyltransferase 2 (298 aa).

At Met-1 the chain carries N-acetylmethionine. Residues 1 to 52 (MESQKEARILQEPVARPPGASRSQTPNAKERQEGGPVPAAAALGAEADDDSA) form a disordered region. Ser-132 carries the phosphoserine modification. The short motif at 178-181 (DGTW) is the DXTW element.

The protein belongs to the TDD superfamily. DTWD2 family.

It localises to the nucleus. The protein resides in the cytoplasm. The enzyme catalyses a uridine in tRNA + S-adenosyl-L-methionine = a 3-[(3S)-3-amino-3-carboxypropyl]uridine in tRNA + S-methyl-5'-thioadenosine + H(+). In terms of biological role, catalyzes the formation of 3-(3-amino-3-carboxypropyl)uridine (acp3U) at position 20a in the D-loop of several cytoplasmic tRNAs (acp3U(20a)). Also has a weak activity to form acp3U at position 20 in the D-loop of tRNAs (acp3U(20)). Involved in glycoRNA biosynthesis by mediating formation of acp3U, which acts as an attachment site for N-glycans on tRNAs. GlycoRNAs consist of RNAs modified with secretory N-glycans that are presented on the cell surface. This Macaca fascicularis (Crab-eating macaque) protein is tRNA-uridine aminocarboxypropyltransferase 2.